The following is a 267-amino-acid chain: 5'-nucleotidase SurE (267 aa).

The a divalent metal cation site is built by D14, D15, S45, and N100.

Belongs to the SurE nucleotidase family. It depends on a divalent metal cation as a cofactor.

It is found in the cytoplasm. The catalysed reaction is a ribonucleoside 5'-phosphate + H2O = a ribonucleoside + phosphate. Functionally, nucleotidase that shows phosphatase activity on nucleoside 5'-monophosphates. In Methanosarcina barkeri (strain Fusaro / DSM 804), this protein is 5'-nucleotidase SurE.